The sequence spans 543 residues: UPF0324 membrane protein RB9488 (543 aa).

Low complexity predominate over residues 1 to 22 (MNSNTPSSDNSSPDNVSPDTSD). The tract at residues 1 to 41 (MNSNTPSSDNSSPDNVSPDTSDMASAGDDSALATPPPRPSL) is disordered. A helical membrane pass occupies residues 51–73 (WWAIWCAALLLLIAFAAVWIGQP). The tract at residues 91–120 (VETAPENAGPSAEAENEAIETENTAPAENA) is disordered. Transmembrane regions (helical) follow at residues 160–182 (ISSS…AFAN), 189–211 (AGAF…WMSG), 221–243 (EYAL…PDFL), 270–292 (LALG…ITTY), 307–329 (NMVI…AAAC), 336–358 (LSLS…PAVI), 368–390 (GGAW…AVLG), 403–422 (IQNI…WVTF), 437–459 (IWYR…SILY), 479–496 (TLRG…GLET), and 511–533 (LVLY…YLMF).

It belongs to the UPF0324 family.

The protein localises to the cell membrane. This chain is UPF0324 membrane protein RB9488, found in Rhodopirellula baltica (strain DSM 10527 / NCIMB 13988 / SH1).